The chain runs to 228 residues: Response regulator SaeR (228 aa).

The region spanning His-3–Leu-116 is the Response regulatory domain. Position 51 is a 4-aspartylphosphate (Asp-51). Residues Val-127 to Arg-226 constitute a DNA-binding region (ompR/PhoB-type).

Post-translationally, phosphorylated by SaeS.

It is found in the cytoplasm. Functionally, member of the two-component regulatory system SaeR/SaeS involved in the regulation of staphylococcal virulence factors in a strain-dependent fashion. Probably functions as a transcriptional regulator via a specific DNA-binding domain, recognizing motifs near the promoter sequences of target genes. The protein is Response regulator SaeR (saeR) of Staphylococcus aureus (strain USA300).